Here is a 139-residue protein sequence, read N- to C-terminus: Large ribosomal subunit protein uL22 (139 aa).

Residues 118-139 (VEVESRPKKVASKSKSQKGSAR) are disordered. The span at 125 to 139 (KKVASKSKSQKGSAR) shows a compositional bias: basic residues.

It belongs to the universal ribosomal protein uL22 family. In terms of assembly, part of the 50S ribosomal subunit.

In terms of biological role, this protein binds specifically to 23S rRNA; its binding is stimulated by other ribosomal proteins, e.g. L4, L17, and L20. It is important during the early stages of 50S assembly. It makes multiple contacts with different domains of the 23S rRNA in the assembled 50S subunit and ribosome. The globular domain of the protein is located near the polypeptide exit tunnel on the outside of the subunit, while an extended beta-hairpin is found that lines the wall of the exit tunnel in the center of the 70S ribosome. The sequence is that of Large ribosomal subunit protein uL22 from Saccharopolyspora erythraea (strain ATCC 11635 / DSM 40517 / JCM 4748 / NBRC 13426 / NCIMB 8594 / NRRL 2338).